Consider the following 639-residue polypeptide: Chaperone protein DnaK (639 aa).

Position 198 is a phosphothreonine; by autocatalysis (threonine 198). Residues 603–618 (AKAQTQGGAQEGAAKQ) show a composition bias toward low complexity. The tract at residues 603–639 (AKAQTQGGAQEGAAKQSNATADDVVDAEFEEVKDDKK) is disordered. Positions 625 to 639 (DVVDAEFEEVKDDKK) are enriched in acidic residues.

Belongs to the heat shock protein 70 family.

Functionally, acts as a chaperone. This chain is Chaperone protein DnaK, found in Shewanella sp. (strain MR-7).